The primary structure comprises 181 residues: Alkyl hydroperoxide reductase AhpD (181 aa).

The active-site Proton donor is the Cys131. An intrachain disulfide couples Cys131 to Cys134. Cys134 (cysteine sulfenic acid (-SOH) intermediate) is an active-site residue.

The protein belongs to the AhpD family.

The enzyme catalyses N(6)-[(R)-dihydrolipoyl]-L-lysyl-[lipoyl-carrier protein] + a hydroperoxide = N(6)-[(R)-lipoyl]-L-lysyl-[lipoyl-carrier protein] + an alcohol + H2O. In terms of biological role, antioxidant protein with alkyl hydroperoxidase activity. Required for the reduction of the AhpC active site cysteine residues and for the regeneration of the AhpC enzyme activity. The protein is Alkyl hydroperoxide reductase AhpD of Azorhizobium caulinodans (strain ATCC 43989 / DSM 5975 / JCM 20966 / LMG 6465 / NBRC 14845 / NCIMB 13405 / ORS 571).